The following is a 300-amino-acid chain: Beta-lactamase (300 aa).

An N-terminal signal peptide occupies residues Met1–Ala29. Residue Ser75 is the Acyl-ester intermediate of the active site. Lys239–Gly241 serves as a coordination point for substrate.

It belongs to the class-A beta-lactamase family. As to quaternary structure, monomer.

It carries out the reaction a beta-lactam + H2O = a substituted beta-amino acid. Its function is as follows. Hydrolyzes broad-spectrum beta-lactam antibiotics. Active against cephalosporins such as cefuroxime and cefotaxime. The polypeptide is Beta-lactamase (blaB) (Proteus vulgaris).